Consider the following 361-residue polypeptide: Phosphoserine aminotransferase (361 aa).

The L-glutamate site is built by Ser-9 and Arg-42. Pyridoxal 5'-phosphate contacts are provided by residues 76–77 (AR), Trp-102, Thr-153, Asp-173, and Gln-196. Lys-197 bears the N6-(pyridoxal phosphate)lysine mark. 238-239 (NT) serves as a coordination point for pyridoxal 5'-phosphate.

Belongs to the class-V pyridoxal-phosphate-dependent aminotransferase family. SerC subfamily. In terms of assembly, homodimer. Pyridoxal 5'-phosphate is required as a cofactor.

It is found in the cytoplasm. The enzyme catalyses O-phospho-L-serine + 2-oxoglutarate = 3-phosphooxypyruvate + L-glutamate. It carries out the reaction 4-(phosphooxy)-L-threonine + 2-oxoglutarate = (R)-3-hydroxy-2-oxo-4-phosphooxybutanoate + L-glutamate. It functions in the pathway amino-acid biosynthesis; L-serine biosynthesis; L-serine from 3-phospho-D-glycerate: step 2/3. It participates in cofactor biosynthesis; pyridoxine 5'-phosphate biosynthesis; pyridoxine 5'-phosphate from D-erythrose 4-phosphate: step 3/5. Its function is as follows. Catalyzes the reversible conversion of 3-phosphohydroxypyruvate to phosphoserine and of 3-hydroxy-2-oxo-4-phosphonooxybutanoate to phosphohydroxythreonine. The protein is Phosphoserine aminotransferase of Sodalis glossinidius (strain morsitans).